Consider the following 415-residue polypeptide: Phosphoglycerate kinase (415 aa).

13 residues coordinate (2R)-3-phosphoglycerate: V23, D24, F25, N26, Q39, R40, S63, H64, G66, R67, L122, R123, and R170. Residue G213 coordinates ADP. G213 contacts CDP. AMP is bound by residues A214 and K215. Position 214 (A214) interacts with ATP. Residue A214 participates in Mg(2+) binding. D218 serves as a coordination point for CDP. Position 218 (D218) interacts with Mg(2+). Residue K219 participates in AMP binding. Residue K219 participates in ATP binding. G237 contributes to the ADP binding site. Residue G237 participates in CDP binding. Positions 238 and 311 each coordinate AMP. ATP is bound by residues G238 and G311. 2 residues coordinate CDP: G336 and F341. ADP is bound at residue F341. E342 contributes to the AMP binding site. ATP contacts are provided by E342, D373, and T374. D373 provides a ligand contact to Mg(2+).

Belongs to the phosphoglycerate kinase family. Monomer. Mg(2+) is required as a cofactor.

It is found in the cytoplasm. Its subcellular location is the mitochondrion. It carries out the reaction (2R)-3-phosphoglycerate + ATP = (2R)-3-phospho-glyceroyl phosphate + ADP. The protein operates within carbohydrate degradation; glycolysis; pyruvate from D-glyceraldehyde 3-phosphate: step 2/5. Catalyzes one of the two ATP producing reactions in the glycolytic pathway via the reversible conversion of 1,3-diphosphoglycerate to 3-phosphoglycerate. Both L- and D- forms of purine and pyrimidine nucleotides can be used as substrates, but the activity is much lower on pyrimidines. Negatively regulates the biosynthesis of acetyl-CoA from pyruvate in the mitochondrion. The polypeptide is Phosphoglycerate kinase (PGKA) (Penicillium chrysogenum (Penicillium notatum)).